A 397-amino-acid chain; its full sequence is Ubiquitin-like modifier-activating enzyme 5 (397 aa).

ATP contacts are provided by G76, D97, K120, N143, and N177. Zn(2+)-binding residues include C219 and C222. The Glycyl thioester intermediate role is filled by C243. Residues C296 and C301 each coordinate Zn(2+). The tract at residues 362–384 (LAYEPPASTKHSETTSTTAVSDD) is disordered. Residues 375-384 (TTSTTAVSDD) show a composition bias toward low complexity.

Belongs to the ubiquitin-activating E1 family. UBA5 subfamily.

Its function is as follows. E1-like enzyme which activates UFM1. The chain is Ubiquitin-like modifier-activating enzyme 5 from Aedes aegypti (Yellowfever mosquito).